A 382-amino-acid chain; its full sequence is Pyrimidine monooxygenase RutA (382 aa).

Residues 68–69 (IK), Asn134, Glu143, 159–160 (RY), and Ser209 contribute to the FMN site.

Belongs to the NtaA/SnaA/DszA monooxygenase family. RutA subfamily.

It carries out the reaction uracil + FMNH2 + NADH + O2 = (Z)-3-ureidoacrylate + FMN + NAD(+) + H2O + H(+). The catalysed reaction is thymine + FMNH2 + NADH + O2 = (Z)-2-methylureidoacrylate + FMN + NAD(+) + H2O + H(+). In terms of biological role, catalyzes the pyrimidine ring opening between N-3 and C-4 by an unusual flavin hydroperoxide-catalyzed mechanism, adding oxygen atoms in the process to yield ureidoacrylate peracid, that immediately reacts with FMN forming ureidoacrylate and FMN-N(5)-oxide. The FMN-N(5)-oxide reacts spontaneously with NADH to produce FMN. Requires the flavin reductase RutF to regenerate FMN in vivo. This is Pyrimidine monooxygenase RutA from Escherichia coli O8 (strain IAI1).